Consider the following 346-residue polypeptide: NADH-ubiquinone oxidoreductase chain 2 (346 aa).

Transmembrane regions (helical) follow at residues 1–21 (MNPH…TITI), 25–45 (HWIM…PLIS), 60–80 (FLVQ…NAWA), 96–116 (MLLT…FWFP), 124–144 (LTTA…ILLM), 149–169 (LNPT…GWMG), 178–198 (ILAF…IYNP), 200–220 (LTLL…LSLN), 242–262 (AALM…GFMP), 274–294 (EMTT…FFYL), and 325–345 (IAIL…ILAA).

The protein belongs to the complex I subunit 2 family.

The protein resides in the mitochondrion inner membrane. The enzyme catalyses a ubiquinone + NADH + 5 H(+)(in) = a ubiquinol + NAD(+) + 4 H(+)(out). Core subunit of the mitochondrial membrane respiratory chain NADH dehydrogenase (Complex I) that is believed to belong to the minimal assembly required for catalysis. Complex I functions in the transfer of electrons from NADH to the respiratory chain. The immediate electron acceptor for the enzyme is believed to be ubiquinone. The polypeptide is NADH-ubiquinone oxidoreductase chain 2 (MT-ND2) (Struthio camelus (Common ostrich)).